The sequence spans 170 residues: Crossover junction endodeoxyribonuclease RuvC (170 aa).

Catalysis depends on residues D9, E70, and D145. Residues D9, E70, and D145 each coordinate Mg(2+).

The protein belongs to the RuvC family. Homodimer which binds Holliday junction (HJ) DNA. The HJ becomes 2-fold symmetrical on binding to RuvC with unstacked arms; it has a different conformation from HJ DNA in complex with RuvA. In the full resolvosome a probable DNA-RuvA(4)-RuvB(12)-RuvC(2) complex forms which resolves the HJ. The cofactor is Mg(2+).

It localises to the cytoplasm. It catalyses the reaction Endonucleolytic cleavage at a junction such as a reciprocal single-stranded crossover between two homologous DNA duplexes (Holliday junction).. Its function is as follows. The RuvA-RuvB-RuvC complex processes Holliday junction (HJ) DNA during genetic recombination and DNA repair. Endonuclease that resolves HJ intermediates. Cleaves cruciform DNA by making single-stranded nicks across the HJ at symmetrical positions within the homologous arms, yielding a 5'-phosphate and a 3'-hydroxyl group; requires a central core of homology in the junction. The consensus cleavage sequence is 5'-(A/T)TT(C/G)-3'. Cleavage occurs on the 3'-side of the TT dinucleotide at the point of strand exchange. HJ branch migration catalyzed by RuvA-RuvB allows RuvC to scan DNA until it finds its consensus sequence, where it cleaves and resolves the cruciform DNA. The sequence is that of Crossover junction endodeoxyribonuclease RuvC from Chlamydia trachomatis serovar A (strain ATCC VR-571B / DSM 19440 / HAR-13).